Consider the following 92-residue polypeptide: Small ribosomal subunit protein uS19 (92 aa).

This sequence belongs to the universal ribosomal protein uS19 family.

Its function is as follows. Protein S19 forms a complex with S13 that binds strongly to the 16S ribosomal RNA. The sequence is that of Small ribosomal subunit protein uS19 from Lactococcus lactis subsp. lactis (strain IL1403) (Streptococcus lactis).